The primary structure comprises 47 residues: Large ribosomal subunit protein bL34 (47 aa).

2 stretches are compositionally biased toward basic residues: residues 1–22 (MAKGKRTFQPNNRRRSRVHGFR) and 36–47 (ARRRKGRKSLTA). Residues 1 to 47 (MAKGKRTFQPNNRRRSRVHGFRSRMSTRAGRAIVSARRRKGRKSLTA) are disordered.

Belongs to the bacterial ribosomal protein bL34 family.

The polypeptide is Large ribosomal subunit protein bL34 (Corynebacterium kroppenstedtii (strain DSM 44385 / JCM 11950 / CIP 105744 / CCUG 35717)).